The primary structure comprises 322 residues: Delta-aminolevulinic acid dehydratase (322 aa).

Residues Cys-120, Cys-122, and Cys-130 each coordinate Zn(2+). Lys-195 acts as the Schiff-base intermediate with substrate in catalysis. 5-aminolevulinate is bound by residues Arg-205 and Arg-217. Glu-233 contributes to the Mg(2+) binding site. The active-site Schiff-base intermediate with substrate is the Lys-248. Positions 274 and 312 each coordinate 5-aminolevulinate.

It belongs to the ALAD family. Homooctamer. The cofactor is Zn(2+).

The catalysed reaction is 2 5-aminolevulinate = porphobilinogen + 2 H2O + H(+). It functions in the pathway porphyrin-containing compound metabolism; protoporphyrin-IX biosynthesis; coproporphyrinogen-III from 5-aminolevulinate: step 1/4. Catalyzes an early step in the biosynthesis of tetrapyrroles. Binds two molecules of 5-aminolevulinate per subunit, each at a distinct site, and catalyzes their condensation to form porphobilinogen. In Archaeoglobus fulgidus (strain ATCC 49558 / DSM 4304 / JCM 9628 / NBRC 100126 / VC-16), this protein is Delta-aminolevulinic acid dehydratase (hemB).